The chain runs to 153 residues: Deoxyuridine 5'-triphosphate nucleotidohydrolase (153 aa).

Residues R71–G73, N84, T88–D90, and K98 contribute to the substrate site.

The protein belongs to the dUTPase family. It depends on Mg(2+) as a cofactor.

The catalysed reaction is dUTP + H2O = dUMP + diphosphate + H(+). The protein operates within pyrimidine metabolism; dUMP biosynthesis; dUMP from dCTP (dUTP route): step 2/2. Functionally, this enzyme is involved in nucleotide metabolism: it produces dUMP, the immediate precursor of thymidine nucleotides and it decreases the intracellular concentration of dUTP so that uracil cannot be incorporated into DNA. This is Deoxyuridine 5'-triphosphate nucleotidohydrolase from Ehrlichia canis (strain Jake).